We begin with the raw amino-acid sequence, 101 residues long: MNLSPRETDKLLVFLAAQVAQRRRERGVKLNHPEAIALISDAVIEAARDGKSVAEAMHIGTTVLTADEVLDEVPDMVSLVQVEATFPDGTKLVSVHDPIRH.

Belongs to the urease gamma subunit family. Heterotrimer of UreA (gamma), UreB (beta) and UreC (alpha) subunits. Three heterotrimers associate to form the active enzyme.

Its subcellular location is the cytoplasm. It carries out the reaction urea + 2 H2O + H(+) = hydrogencarbonate + 2 NH4(+). The protein operates within nitrogen metabolism; urea degradation; CO(2) and NH(3) from urea (urease route): step 1/1. The polypeptide is Urease subunit gamma (Corynebacterium kroppenstedtii (strain DSM 44385 / JCM 11950 / CIP 105744 / CCUG 35717)).